A 208-amino-acid polypeptide reads, in one-letter code: Ras-related protein M-Ras (208 aa).

GTP is bound by residues Asp-21, Gly-22, Gly-23, Val-24, Gly-25, Lys-26, Ser-27, Ala-28, Phe-38, Val-39, Pro-40, Tyr-42, Pro-44, and Thr-45. Residue Ser-27 participates in Mg(2+) binding. An Effector region motif is present at residues 42 to 50; the sequence is YDPTIEDSY. Residues Thr-45 and Asp-67 each coordinate Mg(2+). Gly-70, Asn-126, Lys-127, Asp-129, Ser-156, Ala-157, and Lys-158 together coordinate GTP. Cys-205 carries the cysteine methyl ester modification. Cys-205 carries the S-geranylgeranyl cysteine lipid modification. Positions 206 to 208 are cleaved as a propeptide — removed in mature form; it reads VIL.

The protein belongs to the small GTPase superfamily. Ras family. In terms of assembly, component of the SHOC2-MRAS-PP1c (SMP) holophosphatase complex consisting of SHOC2, GTP-bound M-Ras/MRAS and the catalytic subunit of protein phosphatase 1 (either PPP1CA, PPP1CB or PPP1CC). Interacts (active GTP-bound form) with both SHOC2 and PP1c (all isoforms) to form a tertiary complex; SHOC2 and PP1c preferably bind M-Ras/MRAS, but they also bind K-Ras/KRAS, N-Ras/NRAS and H-Ras/HRAS. Interacts with RGL3. Interacts (active GTP-bound form preferentially) with RGS14. It depends on Mg(2+) as a cofactor. In terms of tissue distribution, expression highly restricted to the brain and heart.

The protein resides in the cell membrane. The enzyme catalyses GTP + H2O = GDP + phosphate + H(+). Its function is as follows. Signal transducer in the Ras-MAPK signaling pathway that regulates cell proliferation and survival. Core component of the SHOC2-MRAS-PP1c (SMP) holophosphatase complex that regulates the MAPK pathway activation. The formation of the SMP complex only occurs when MRAS is GTP-bound. MRAS has low intrinsic GTPase activity and may require additional factors for activation. The SMP complex specifically dephosphorylates the inhibitory phosphorylation at 'Ser-259' of RAF1 kinase, 'Ser-365' of BRAF kinase and 'Ser-214' of ARAF kinase, stimulating their kinase activities. This chain is Ras-related protein M-Ras (MRAS), found in Homo sapiens (Human).